The chain runs to 316 residues: Ribonuclease Z (316 aa).

Zn(2+)-binding residues include H61, H63, D65, H66, H152, D220, and H279. D65 (proton acceptor) is an active-site residue.

This sequence belongs to the RNase Z family. Homodimer. The cofactor is Zn(2+).

The enzyme catalyses Endonucleolytic cleavage of RNA, removing extra 3' nucleotides from tRNA precursor, generating 3' termini of tRNAs. A 3'-hydroxy group is left at the tRNA terminus and a 5'-phosphoryl group is left at the trailer molecule.. In terms of biological role, zinc phosphodiesterase, which displays some tRNA 3'-processing endonuclease activity. Probably involved in tRNA maturation, by removing a 3'-trailer from precursor tRNA. This is Ribonuclease Z from Clostridium perfringens (strain ATCC 13124 / DSM 756 / JCM 1290 / NCIMB 6125 / NCTC 8237 / Type A).